Reading from the N-terminus, the 150-residue chain is Transcriptional repressor NrdR (150 aa).

Residues 3-34 (CPFCAFADSKVVDSRPDKGGSTIRRRRECESC) fold into a zinc finger. Residues 49-139 (PLVIKKDGRR…VYRSFKDITE (91 aa)) enclose the ATP-cone domain.

This sequence belongs to the NrdR family. Requires Zn(2+) as cofactor.

Negatively regulates transcription of bacterial ribonucleotide reductase nrd genes and operons by binding to NrdR-boxes. The chain is Transcriptional repressor NrdR from Geotalea uraniireducens (strain Rf4) (Geobacter uraniireducens).